Here is a 205-residue protein sequence, read N- to C-terminus: Outer-membrane lipoprotein carrier protein (205 aa).

The N-terminal stretch at 1–21 is a signal peptide; the sequence is MRFLAVATMVVALMVPWSVRA.

It belongs to the LolA family. Monomer.

It localises to the periplasm. In terms of biological role, participates in the translocation of lipoproteins from the inner membrane to the outer membrane. Only forms a complex with a lipoprotein if the residue after the N-terminal Cys is not an aspartate (The Asp acts as a targeting signal to indicate that the lipoprotein should stay in the inner membrane). The polypeptide is Outer-membrane lipoprotein carrier protein (Methylobacillus flagellatus (strain ATCC 51484 / DSM 6875 / VKM B-1610 / KT)).